The following is a 479-amino-acid chain: (R)-1-hydroxy-2-aminoethylphosphonate ammonia-lyase (479 aa).

Lys317 is subject to N6-(pyridoxal phosphate)lysine.

Belongs to the class-III pyridoxal-phosphate-dependent aminotransferase family. The cofactor is pyridoxal 5'-phosphate.

The enzyme catalyses (1R)-(2-amino-1-hydroxyethyl)phosphonate = phosphonoacetaldehyde + NH4(+). Its function is as follows. Involved in phosphonate degradation. Functions as a lyase that catalyzes an elimination reaction on the naturally occurring compound (R)-1-hydroxy-2-aminoethylphosphonate ((R)-HAEP), releasing ammonia and generating phosphonoacetaldehyde (PAA), which can be then hydrolyzed by PhnX, encoded by an adjacent gene. Thus, catalyzes a reaction that serves to funnel (R)-HAEP into the hydrolytic pathway for aminoethylphosphonate (AEP, the most common biogenic phosphonate) degradation, expanding the scope and the usefulness of the pathway itself. Is not active toward the (S) enantiomer of HAEP or other HAEP-related compounds such as ethanolamine and D,L-isoserine, indicating a very high substrate specificity. This is (R)-1-hydroxy-2-aminoethylphosphonate ammonia-lyase from Vibrio splendidus (strain 12B01).